A 94-amino-acid polypeptide reads, in one-letter code: Probable FAD-linked sulfhydryl oxidase FPV093 (94 aa).

One can recognise an ERV/ALR sulfhydryl oxidase domain in the interval 1–94 (MDPRYWGSSF…IDIKKVKKLI (94 aa)). An intrachain disulfide couples Cys41 to Cys44.

Belongs to the poxviruses E10 family. FAD is required as a cofactor.

The enzyme catalyses 2 R'C(R)SH + O2 = R'C(R)S-S(R)CR' + H2O2. FAD-dependent sulfhydryl oxidase that catalyzes disulfide bond formation. The sequence is that of Probable FAD-linked sulfhydryl oxidase FPV093 from Fowlpox virus (strain NVSL) (FPV).